Here is a 201-residue protein sequence, read N- to C-terminus: FMN-dependent NADH:quinone oxidoreductase (201 aa).

FMN-binding positions include Ser9 and Ser16–Ser18.

The protein belongs to the azoreductase type 1 family. In terms of assembly, homodimer. Requires FMN as cofactor.

It catalyses the reaction 2 a quinone + NADH + H(+) = 2 a 1,4-benzosemiquinone + NAD(+). It carries out the reaction N,N-dimethyl-1,4-phenylenediamine + anthranilate + 2 NAD(+) = 2-(4-dimethylaminophenyl)diazenylbenzoate + 2 NADH + 2 H(+). In terms of biological role, quinone reductase that provides resistance to thiol-specific stress caused by electrophilic quinones. Functionally, also exhibits azoreductase activity. Catalyzes the reductive cleavage of the azo bond in aromatic azo compounds to the corresponding amines. This chain is FMN-dependent NADH:quinone oxidoreductase, found in Mesomycoplasma hyopneumoniae (strain 232) (Mycoplasma hyopneumoniae).